The chain runs to 1143 residues: DNA-directed RNA polymerase subunit beta (1143 aa).

It belongs to the RNA polymerase beta chain family. As to quaternary structure, in plastids the minimal PEP RNA polymerase catalytic core is composed of four subunits: alpha, beta, beta', and beta''. When a (nuclear-encoded) sigma factor is associated with the core the holoenzyme is formed, which can initiate transcription.

It localises to the plastid. The protein localises to the chloroplast. The enzyme catalyses RNA(n) + a ribonucleoside 5'-triphosphate = RNA(n+1) + diphosphate. In terms of biological role, DNA-dependent RNA polymerase catalyzes the transcription of DNA into RNA using the four ribonucleoside triphosphates as substrates. The chain is DNA-directed RNA polymerase subunit beta from Porphyra purpurea (Red seaweed).